The chain runs to 523 residues: Tyrosine/DOPA decarboxylase 5 (523 aa).

The span at Met-1–Pro-19 shows a compositional bias: polar residues. Disordered regions lie at residues Met-1–Leu-20 and Ser-47–His-66. Lys-321 bears the N6-(pyridoxal phosphate)lysine mark.

Belongs to the group II decarboxylase family. In terms of assembly, homodimer. It depends on pyridoxal 5'-phosphate as a cofactor. As to expression, roots.

The catalysed reaction is L-tyrosine + H(+) = tyramine + CO2. The enzyme catalyses L-dopa + H(+) = dopamine + CO2. It carries out the reaction 5-hydroxy-L-tryptophan + H(+) = serotonin + CO2. May play an important role in providing precursors for alkaloid synthesis in the roots and germinating seedlings. This is Tyrosine/DOPA decarboxylase 5 (TYDC5) from Papaver somniferum (Opium poppy).